An 841-amino-acid chain; its full sequence is Replication origin-binding protein (841 aa).

Residues 45-210 (PLYPRTRNVL…AIMRGEENIH (166 aa)) enclose the Helicase ATP-binding domain. Residue 58-65 (APMGSGKT) coordinates ATP.

It belongs to the herpesviridae OriBP family. In terms of assembly, homodimer. Interacts with the major DNA-binding protein. Interacts with the DNA helicase/primase complex-associated protein and the polymerase accessory protein.

It localises to the host nucleus. In terms of biological role, functions as a docking protein to recruit essential components of the viral replication machinery to viral DNA origins. In the presence of the major DNA-binding protein, opens dsDNA leading to a conformational change in the origin that facilitates DNA unwinding and subsequent replication. The sequence is that of Replication origin-binding protein (MDV021) from Gallid herpesvirus 2 (strain Chicken/Md5/ATCC VR-987) (GaHV-2).